The chain runs to 325 residues: Undecaprenyl-phosphate 4-deoxy-4-formamido-L-arabinose transferase (325 aa).

The next 2 membrane-spanning stretches (helical) occupy residues 235-255 (LSVV…LLMV) and 269-291 (VFTL…GLLG).

It belongs to the glycosyltransferase 2 family.

The protein resides in the cell inner membrane. The catalysed reaction is UDP-4-deoxy-4-formamido-beta-L-arabinose + di-trans,octa-cis-undecaprenyl phosphate = 4-deoxy-4-formamido-alpha-L-arabinopyranosyl di-trans,octa-cis-undecaprenyl phosphate + UDP. It participates in glycolipid biosynthesis; 4-amino-4-deoxy-alpha-L-arabinose undecaprenyl phosphate biosynthesis; 4-amino-4-deoxy-alpha-L-arabinose undecaprenyl phosphate from UDP-4-deoxy-4-formamido-beta-L-arabinose and undecaprenyl phosphate: step 1/2. Its pathway is bacterial outer membrane biogenesis; lipopolysaccharide biosynthesis. Functionally, catalyzes the transfer of 4-deoxy-4-formamido-L-arabinose from UDP to undecaprenyl phosphate. The modified arabinose is attached to lipid A and is required for resistance to polymyxin and cationic antimicrobial peptides. Essential for virulence in insects. This chain is Undecaprenyl-phosphate 4-deoxy-4-formamido-L-arabinose transferase, found in Photorhabdus laumondii subsp. laumondii (strain DSM 15139 / CIP 105565 / TT01) (Photorhabdus luminescens subsp. laumondii).